Consider the following 214-residue polypeptide: Probable nicotinate-nucleotide adenylyltransferase (214 aa).

It belongs to the NadD family.

The catalysed reaction is nicotinate beta-D-ribonucleotide + ATP + H(+) = deamido-NAD(+) + diphosphate. It functions in the pathway cofactor biosynthesis; NAD(+) biosynthesis; deamido-NAD(+) from nicotinate D-ribonucleotide: step 1/1. Its function is as follows. Catalyzes the reversible adenylation of nicotinate mononucleotide (NaMN) to nicotinic acid adenine dinucleotide (NaAD). The chain is Probable nicotinate-nucleotide adenylyltransferase from Pseudomonas fluorescens (strain ATCC BAA-477 / NRRL B-23932 / Pf-5).